A 293-amino-acid polypeptide reads, in one-letter code: Epidermal growth factor-like protein 8 (293 aa).

Positions 1-28 (MGLWAELCISLRGLSFFLVLMTGEGTRG) are cleaved as a signal peptide. Positions 34-112 (SLGVCSKQTL…PHPGALTCDA (79 aa)) constitute an EMI domain. 9 cysteine pairs are disulfide-bonded: cysteine 38-cysteine 97, cysteine 65-cysteine 71, cysteine 96-cysteine 110, cysteine 114-cysteine 124, cysteine 118-cysteine 130, cysteine 132-cysteine 141, cysteine 148-cysteine 159, cysteine 155-cysteine 168, and cysteine 170-cysteine 183. Asparagine 50 carries N-linked (GlcNAc...) asparagine glycosylation. Positions 111–142 (DAICSKPCLNGGVCTGPDRCECAPGWGGKHCH) constitute an EGF-like 1 domain. The EGF-like 2; calcium-binding domain maps to 144–184 (DVDECRASLTLCSHGCLNTLGSFLCSCPHPLVLGLDGRTCA). Residues 206–235 (SEEERALRWEVAELRGRLEKLEQWATQAGA) adopt a coiled-coil conformation.

As to expression, ubiquitously expressed in brain, kidney, thymus and lung.

It localises to the secreted. The sequence is that of Epidermal growth factor-like protein 8 (Egfl8) from Mus musculus (Mouse).